The following is a 156-amino-acid chain: ATP synthase subunit b (156 aa).

The helical transmembrane segment at 7–27 (LIGQTIAFIVFVWFCMKFVWP) threads the bilayer.

It belongs to the ATPase B chain family. As to quaternary structure, F-type ATPases have 2 components, F(1) - the catalytic core - and F(0) - the membrane proton channel. F(1) has five subunits: alpha(3), beta(3), gamma(1), delta(1), epsilon(1). F(0) has three main subunits: a(1), b(2) and c(10-14). The alpha and beta chains form an alternating ring which encloses part of the gamma chain. F(1) is attached to F(0) by a central stalk formed by the gamma and epsilon chains, while a peripheral stalk is formed by the delta and b chains.

The protein localises to the cell inner membrane. Its function is as follows. F(1)F(0) ATP synthase produces ATP from ADP in the presence of a proton or sodium gradient. F-type ATPases consist of two structural domains, F(1) containing the extramembraneous catalytic core and F(0) containing the membrane proton channel, linked together by a central stalk and a peripheral stalk. During catalysis, ATP synthesis in the catalytic domain of F(1) is coupled via a rotary mechanism of the central stalk subunits to proton translocation. In terms of biological role, component of the F(0) channel, it forms part of the peripheral stalk, linking F(1) to F(0). In Idiomarina loihiensis (strain ATCC BAA-735 / DSM 15497 / L2-TR), this protein is ATP synthase subunit b.